Consider the following 169-residue polypeptide: Large ribosomal subunit protein uL10 (169 aa).

It belongs to the universal ribosomal protein uL10 family. Part of the ribosomal stalk of the 50S ribosomal subunit. The N-terminus interacts with L11 and the large rRNA to form the base of the stalk. The C-terminus forms an elongated spine to which L12 dimers bind in a sequential fashion forming a multimeric L10(L12)X complex.

Its function is as follows. Forms part of the ribosomal stalk, playing a central role in the interaction of the ribosome with GTP-bound translation factors. This chain is Large ribosomal subunit protein uL10, found in Orientia tsutsugamushi (strain Ikeda) (Rickettsia tsutsugamushi).